Reading from the N-terminus, the 181-residue chain is PLAT domain-containing protein 1 (181 aa).

An N-terminal signal peptide occupies residues methionine 1–leucine 14. Alanine 15 is subject to N-acetylalanine. The 128-residue stretch at cysteine 29–asparagine 156 folds into the PLAT domain.

As to expression, expressed in root tips, pericycle cells, lateral root primordia, stomata, leaf vasculature, hydathodes and floral organs.

The protein resides in the endoplasmic reticulum. It localises to the plastid. It is found in the chloroplast. The protein localises to the plastoglobule. In terms of biological role, positive regulator of abiotic stress tolerance involved in the regulation of plant growth. May be a downstream target of the abscisic acid (ABA) signaling pathway. This chain is PLAT domain-containing protein 1, found in Arabidopsis thaliana (Mouse-ear cress).